Here is a 299-residue protein sequence, read N- to C-terminus: UDP-3-O-acyl-N-acetylglucosamine deacetylase (299 aa).

3 residues coordinate Zn(2+): His75, His232, and Asp236. The active-site Proton donor is the His259.

The protein belongs to the LpxC family. The cofactor is Zn(2+).

It carries out the reaction a UDP-3-O-[(3R)-3-hydroxyacyl]-N-acetyl-alpha-D-glucosamine + H2O = a UDP-3-O-[(3R)-3-hydroxyacyl]-alpha-D-glucosamine + acetate. Its pathway is glycolipid biosynthesis; lipid IV(A) biosynthesis; lipid IV(A) from (3R)-3-hydroxytetradecanoyl-[acyl-carrier-protein] and UDP-N-acetyl-alpha-D-glucosamine: step 2/6. Catalyzes the hydrolysis of UDP-3-O-myristoyl-N-acetylglucosamine to form UDP-3-O-myristoylglucosamine and acetate, the committed step in lipid A biosynthesis. In Helicobacter hepaticus (strain ATCC 51449 / 3B1), this protein is UDP-3-O-acyl-N-acetylglucosamine deacetylase.